Consider the following 609-residue polypeptide: MNKTQRHINWLLAVSAATALPVTAAEMINVNDGSLLNQALKAQSQSVAPVETGFKQMKRVVLPNGKVKVRYQQTHHGLPVFNTSVVATESKSGSSEVFGVMAQGIADDVSTLTPSVEMKQAISIAKSRFQQQEKMVAEPATENEKAELMVRLDDNNQAQLVYLVDFFVAEDHPARPFFFIDAQTGEVLQTWDGLNHAQADGTGPGGNTKTGRYEYGSDFPPFVIDKVGTKCSMNNSAVRTVDLNGSTSGNTTYSYTCNDSTNYNDYKAINGAYSPLNDAHYFGKVVFDMYKDWMNTTPLTFQLTMRVHYGNNYENAFWNGSSMTFGDGYSTFYPLVDINVSAHEVSHGFTEQNSGLVYENMSGGMNEAFSDIAGEAAEFYMKGSVDWVVGADIFKSSGGLRYFDQPSRDGRSIDHASDYYNGLNVHYSSGVFNRAFYLLANKAGWDVRKGFEVFTLANQLYWTANSTFDEGGCGVVKAASDMGYSVADVEDAFNTVGVNASCGATPPPSGDVLEIGKPLANLSGNRNDMTYYTFTPSSSSSVVIKITGGTGDADLYVKAGSKPTTTSYDCRPYKYGNEEQCSISAQAGTTYHVMLRGYSNYAGVTLRAD.

Residues 1–24 form the signal peptide; that stretch reads MNKTQRHINWLLAVSAATALPVTA. The propeptide occupies 25-196; that stretch reads AEMINVNDGS…VLQTWDGLNH (172 aa). Histidine 343 lines the Zn(2+) pocket. Residue glutamate 344 is part of the active site. Positions 347 and 367 each coordinate Zn(2+). The active-site Proton donor is the histidine 426.

This sequence belongs to the peptidase M4 family. The cofactor is Zn(2+).

It is found in the secreted. It carries out the reaction Preferential cleavage of bonds with bulky hydrophobic groups in P2 and P1'. Phe at P1' is the most favored residue, which distinguished this enzyme from thermolysin.. Functionally, extracellular zinc metalloprotease. The chain is Neutral protease (nprV) from Vibrio proteolyticus (Aeromonas proteolytica).